Here is a 122-residue protein sequence, read N- to C-terminus: Putative cryptic phosphonate transport system permease protein PhnE2 (122 aa).

One can recognise an ABC transmembrane type-1 domain in the interval 1–114 (MLALFIHTTG…VTVSLLDFLS (114 aa)). 4 consecutive transmembrane segments (helical) span residues 3–23 (ALFIHTTGVLSKLLSEAVEAI), 39–59 (LEEILYGVLPQVMPLLISYSL), 68–88 (SATVVGMVGAGGIGVTLWEAI), and 93–113 (FQQTCALMVLIIVTVSLLDFL).

It belongs to the binding-protein-dependent transport system permease family. As to quaternary structure, if the reading frame is restored, the complex is composed of two ATP-binding proteins (PhnC), two transmembrane proteins (PhnE) and a solute-binding protein (PhnD).

It is found in the cell inner membrane. Its function is as follows. C-terminal fragment of the PhnE protein, part of a phosphonate usage operon that is cryptic in K12 strains. Growth of K12 strains on phosphonate can be observed when it is used as the sole phosphorus source after a 60 hour lag period, suggesting the operon is activated. An intact PhnE in strain B is (AC A0A140NFA3). Part of the binding-protein-dependent transport system for phosphonates; probably responsible for the translocation of the substrate across the membrane. The polypeptide is Putative cryptic phosphonate transport system permease protein PhnE2 (phnE) (Escherichia coli (strain K12)).